Consider the following 296-residue polypeptide: Glucokinase (296 aa).

This sequence belongs to the ROK (NagC/XylR) family. As to quaternary structure, homodimer. A divalent metal cation is required as a cofactor.

It catalyses the reaction D-glucose + ATP = D-glucose 6-phosphate + ADP + H(+). Functionally, catalyzes the phosphorylation of D-glucose to D-glucose 6-phosphate using ATP as the phosphate donor. Has a broad hexose specificity, and in addition to glucose, which shows the highest catalytic efficiency, it can also phosphorylate fructose, mannose, galactose and sorbitol. Can also use CTP, GTP or UTP as phosphoryl donor. The chain is Glucokinase from Pyrobaculum calidifontis (strain DSM 21063 / JCM 11548 / VA1).